The sequence spans 228 residues: L-ribulose-5-phosphate 4-epimerase UlaF (228 aa).

Substrate contacts are provided by residues 26 to 27, 43 to 44, and 72 to 73; these read GN, SG, and SS. Zn(2+) is bound by residues Asp74, His93, and His95. Residue Asp118 is the Proton donor/acceptor of the active site. His167 contacts Zn(2+). The Proton donor/acceptor role is filled by Tyr225.

This sequence belongs to the aldolase class II family. AraD/FucA subfamily. Zn(2+) serves as cofactor.

It carries out the reaction L-ribulose 5-phosphate = D-xylulose 5-phosphate. It functions in the pathway cofactor degradation; L-ascorbate degradation; D-xylulose 5-phosphate from L-ascorbate: step 4/4. Catalyzes the isomerization of L-ribulose 5-phosphate to D-xylulose 5-phosphate. Is involved in the anaerobic L-ascorbate utilization. The polypeptide is L-ribulose-5-phosphate 4-epimerase UlaF (Escherichia coli O81 (strain ED1a)).